The sequence spans 296 residues: Nucleotide-binding protein SGO_0954 (296 aa).

13 to 20 (GMSGAGKT) lines the ATP pocket. Residue 63–66 (DMRS) participates in GTP binding.

The protein belongs to the RapZ-like family.

Its function is as follows. Displays ATPase and GTPase activities. This Streptococcus gordonii (strain Challis / ATCC 35105 / BCRC 15272 / CH1 / DL1 / V288) protein is Nucleotide-binding protein SGO_0954.